We begin with the raw amino-acid sequence, 291 residues long: Glucose and ribitol dehydrogenase (291 aa).

The segment at 1–35 (MASGGQFPPQKQESQPGKEHLMDPSPQHASPHYKP) is disordered. 45 to 69 (LVTGGDSGIGRSVCYHFALEGATVA) lines the NAD(+) pocket. Ser183 contacts substrate. The active-site Proton acceptor is Tyr196.

The protein belongs to the short-chain dehydrogenases/reductases (SDR) family. As to expression, expressed in embryogenic cells, somatic embryos and seeds in the later stages of development, but not in non-embryogenic cells and mature leaves.

Functionally, may act as a short alcohol-polyol-sugar dehydrogenase possibly related to carbohydrate metabolism and the acquisition of desiccation tolerance. May also be involved in signal transduction. The protein is Glucose and ribitol dehydrogenase (CAISE5) of Daucus carota (Wild carrot).